The primary structure comprises 344 residues: MTDSKYVIIGAGISGLYTAWSLIDKGTGPSDIKVVAEFLPGDQSTLYTSPWAGGNFSLITSTDERSMKFDKFTYTNLHRIQELLGGPECGLDMLPSTEMFEQELDHAKLDSISQYLKEYRPMTKEEMPEGVVSGVKFLTWNFNCPLFLANFQKHLAAIGVTFERSKIDHISSVFSPSVDAVFNCTGIGAASLGGVKDENVFPTRGQVVVVRAPHIRENRFRWRPDSDTYVIPRPFSDGSIVMGGFFQEGNWSGNTYGYETEDILKRGLELYPEIGKRNELKIIREAAGLRPSRKGGVRIEVEHFDQVNGKDRYIVHNYGASGYGYQSGLGMANEATDMYFEAAK.

FAD-binding residues include Ala11, Ser14, Ser49, Gly53, Asn55, and Ile167. The (R)-lactate site is built by Tyr229 and Arg290. Positions 229 and 290 each coordinate anthranilate. Residues Arg290, Ser321, Gly324, Tyr325, and Gln326 each coordinate FAD.

The protein belongs to the DAMOX/DASOX family. FAD is required as a cofactor.

Its subcellular location is the peroxisome. The enzyme catalyses a D-alpha-amino acid + O2 + H2O = a 2-oxocarboxylate + H2O2 + NH4(+). It carries out the reaction D-alanine + O2 + H2O = pyruvate + H2O2 + NH4(+). Catalyzes the oxidative deamination of D-amino acids with broad substrate specificity. Enables the organism to utilize D-amino acids as a source of nutrients. Enables the organism to utilize D-alanine as a source of nitrogen. This chain is D-amino-acid oxidase, found in Komagataella phaffii (strain GS115 / ATCC 20864) (Yeast).